The chain runs to 575 residues: Preprotein translocase subunit SCY2, chloroplastic (575 aa).

The transit peptide at 1–34 (MNSSQACFFHFSLRPISLSHPSYAFLSKRDPFLC) directs the protein to the chloroplast. Helical transmembrane passes span 157 to 177 (FVTAVLLVLSRVGYFIPLPGF), 206 to 226 (LSLFQLGLSPQIIASIIMQVL), 251 to 271 (IWWLSFFFAIVEALVVAYTSL), 285 to 305 (VMMTSSLLVCGAMTMTWLCDT), 306 to 326 (ISESGFGHGSSLIICVGILTG), 346 to 366 (LPYLLGLLGIFTVVTMFAVVV), 414 to 434 (TTYLLAFPSILASILGSPFLL), 447 to 467 (GAPPWVYYSIYAFFVFLFNIF), 509 to 529 (FWGGLLLSFLATASTVLDHYL), and 531 to 551 (SINQGFSIGFTSVLIIVGSII).

Belongs to the SecY/SEC61-alpha family. In terms of assembly, part of a second Sec protein translocation apparatus. Interacts probably with SECA2. In terms of tissue distribution, ubiquitous.

The protein localises to the plastid. It localises to the chloroplast membrane. The protein resides in the amyloplast membrane. Its subcellular location is the chloroplast thylakoid membrane. Involved in protein export. Probably interacts with other proteins to allow the postimport or conservative sorting pathway for inner membrane proteins in plastids. Central subunit of the protein translocation channel SecYE. Consists of two halves formed by TMs 1-5 and 6-10. These two domains form a lateral gate at the front which open onto the bilayer between TMs 2 and 7, and are clamped together by SecE at the back. The channel is closed by both a pore ring composed of hydrophobic SecY resides and a short helix (helix 2A) on the extracellular side of the membrane which forms a plug. The protein is Preprotein translocase subunit SCY2, chloroplastic (SCY2) of Arabidopsis thaliana (Mouse-ear cress).